Here is a 222-residue protein sequence, read N- to C-terminus: Glutathione transferase GST 23 (222 aa).

A GST N-terminal domain is found at 4–83 (KGVKVLGMWA…YIDEVWKGGY (80 aa)). Residues Ser-14, Lys-41, Val-55, and 67–68 (ES) each bind glutathione. A GST C-terminal domain is found at 89-220 (DPYERAQARF…ANKARREQLL (132 aa)).

This sequence belongs to the GST superfamily.

It carries out the reaction RX + glutathione = an S-substituted glutathione + a halide anion + H(+). Involved in multiple disease resistance (MDR). This chain is Glutathione transferase GST 23, found in Zea mays (Maize).